The primary structure comprises 124 residues: Small ribosomal subunit protein uS12 (124 aa).

Asp-89 carries the 3-methylthioaspartic acid modification. A disordered region spans residues 105–124 (AGVKDRRQSRSKYGAKRPKA). The span at 113 to 124 (SRSKYGAKRPKA) shows a compositional bias: basic residues.

This sequence belongs to the universal ribosomal protein uS12 family. As to quaternary structure, part of the 30S ribosomal subunit. Contacts proteins S8 and S17. May interact with IF1 in the 30S initiation complex.

With S4 and S5 plays an important role in translational accuracy. Its function is as follows. Interacts with and stabilizes bases of the 16S rRNA that are involved in tRNA selection in the A site and with the mRNA backbone. Located at the interface of the 30S and 50S subunits, it traverses the body of the 30S subunit contacting proteins on the other side and probably holding the rRNA structure together. The combined cluster of proteins S8, S12 and S17 appears to hold together the shoulder and platform of the 30S subunit. This chain is Small ribosomal subunit protein uS12 (rpsL), found in Synechococcus elongatus (strain ATCC 33912 / PCC 7942 / FACHB-805) (Anacystis nidulans R2).